The primary structure comprises 697 residues: MIPPQEASARRREIEDKLKQEEETLSFIRDSLEKSDQLTRNMVSILSSFESRLMKLENSIIPVHKQTENLQRLQENVEKTLSCLDHVISYYHVASDTEKIIREGPTGRLEEYLGSMAKIQKAVEYFQDNSPDSPELNKVKLLFERGKESLESEFRSLMTRHSKVVSPVLLLDLISADDELEVQEDVVLEHLPESVLRDVVRISRWLVEYGRNQDFMNVYYQIRSSQLDRSIKGLKEHFRKSSSSSGVPYSPAIPNKRKDTPTKKPIKRPGTIRKAQNLLKQYSQHGLDGKKGGSNLIPLEGRDDMLDVETDAYIHCVSAFVKLAQSEYRLLMEIIPEHHQKKTFDSLIQDALDGLMLEGENIVSAARKAIIRHDFSTVLTVFPILRHLKQTKPEFDQVLQGTAASTKNKLPGLITSMETIGAKALEDFADNIKNDPDKEYNMPKDGTVHELTSNAILFLQQLLDFQETAGAMLASQVLGDTYNIPLDPRETSSSATSYSSEFSKRLLSTYICKVLGNLQLNLLSKSKVYEDPALSAIFLHNNYNYILKSLEKSELIQLVAVTQKTAERSYREHIEQQIQTYQRSWLKVTDYIAEKNLPVFQPGVKLRDKERQMIKERFKGFNDGLEELCKIQKVWAIPDTEQRDKIRQAQKDIVKETYGAFLHRYGSVPFTKNPEKYIKYRVEQVGDMIDRLFDTSA.

Residues Met-1–Ile-384 form an SEC8 and ARHQ binding region. 2 coiled-coil regions span residues Gln-5–Met-42 and Val-63–Asp-85. The residue at position 133 (Ser-133) is a Phosphoserine. The interval Phe-238–Gly-270 is disordered.

The protein belongs to the EXO70 family. In terms of assembly, the exocyst complex is composed of EXOC1, EXOC2, EXOC3, EXOC4, EXOC5, EXOC6, EXOC7 and EXOC8. Interacts with RAB11FIP3. Interacts with ARHQ in a GTP-dependent manner.

The protein localises to the cytoplasm. Its subcellular location is the cytosol. It is found in the cell membrane. The protein resides in the midbody. It localises to the midbody ring. In terms of biological role, component of the exocyst complex involved in the docking of exocytic vesicles with fusion sites on the plasma membrane. In adipocytes, plays a crucial role in targeting SLC2A4 vesicle to the plasma membrane in response to insulin, perhaps directing the vesicle to the precise site of fusion. It is required for neuron survival and plays an essential role in cortical development. In Mus musculus (Mouse), this protein is Exocyst complex component 7 (Exoc7).